A 1200-amino-acid chain; its full sequence is Zinc finger protein 804A (1200 aa).

Residues 57–81 (FYCELCDKQYYKHQEFDNHINSYDH) form a C2H2-type zinc finger. Disordered stretches follow at residues 252 to 280 (STSH…PEAM), 343 to 367 (DGPV…RTSA), 582 to 687 (HWFH…NCGG), 727 to 777 (EDDG…SDES), 799 to 828 (QPKK…NYPM), and 874 to 949 (PYNP…TNPE). Basic residues predominate over residues 585-603 (HKSRRKKKRRKLCRYHPGK). Residues 604–666 (SSKEPEGSGK…ASTHLGEKET (63 aa)) show a composition bias toward basic and acidic residues. Composition is skewed to polar residues over residues 667–687 (MNTT…NCGG) and 732–756 (LASQ…SLTN). The segment covering 800-811 (PKKKRRRKRSRL) has biased composition (basic residues). The span at 891–944 (TETTPCDSSQTSNDLATPVNVTRDPSNSTTDNTLLEHNQRSQTTNSNEKQTPFK) shows a compositional bias: polar residues.

The sequence is that of Zinc finger protein 804A (Znf804a) from Mus musculus (Mouse).